The primary structure comprises 841 residues: DNA mismatch repair protein MutS (841 aa).

600–607 (GPNMAGKS) contributes to the ATP binding site.

The protein belongs to the DNA mismatch repair MutS family.

This protein is involved in the repair of mismatches in DNA. It is possible that it carries out the mismatch recognition step. This protein has a weak ATPase activity. This chain is DNA mismatch repair protein MutS, found in Carboxydothermus hydrogenoformans (strain ATCC BAA-161 / DSM 6008 / Z-2901).